We begin with the raw amino-acid sequence, 162 residues long: Peptide deformylase (162 aa).

Residues C91 and H133 each coordinate Fe cation. Residue E134 is part of the active site. Position 137 (H137) interacts with Fe cation.

This sequence belongs to the polypeptide deformylase family. Fe(2+) serves as cofactor.

It carries out the reaction N-terminal N-formyl-L-methionyl-[peptide] + H2O = N-terminal L-methionyl-[peptide] + formate. Functionally, removes the formyl group from the N-terminal Met of newly synthesized proteins. Requires at least a dipeptide for an efficient rate of reaction. N-terminal L-methionine is a prerequisite for activity but the enzyme has broad specificity at other positions. The protein is Peptide deformylase of Finegoldia magna (strain ATCC 29328 / DSM 20472 / WAL 2508) (Peptostreptococcus magnus).